Reading from the N-terminus, the 153-residue chain is SsrA-binding protein (153 aa).

It belongs to the SmpB family.

The protein localises to the cytoplasm. Its function is as follows. Required for rescue of stalled ribosomes mediated by trans-translation. Binds to transfer-messenger RNA (tmRNA), required for stable association of tmRNA with ribosomes. tmRNA and SmpB together mimic tRNA shape, replacing the anticodon stem-loop with SmpB. tmRNA is encoded by the ssrA gene; the 2 termini fold to resemble tRNA(Ala) and it encodes a 'tag peptide', a short internal open reading frame. During trans-translation Ala-aminoacylated tmRNA acts like a tRNA, entering the A-site of stalled ribosomes, displacing the stalled mRNA. The ribosome then switches to translate the ORF on the tmRNA; the nascent peptide is terminated with the 'tag peptide' encoded by the tmRNA and targeted for degradation. The ribosome is freed to recommence translation, which seems to be the essential function of trans-translation. This Sulfurovum sp. (strain NBC37-1) protein is SsrA-binding protein.